The sequence spans 283 residues: Elongation factor Ts (283 aa).

The segment at 80-83 is involved in Mg(2+) ion dislocation from EF-Tu; it reads TDFV.

It belongs to the EF-Ts family.

The protein resides in the cytoplasm. Its function is as follows. Associates with the EF-Tu.GDP complex and induces the exchange of GDP to GTP. It remains bound to the aminoacyl-tRNA.EF-Tu.GTP complex up to the GTP hydrolysis stage on the ribosome. This chain is Elongation factor Ts, found in Salmonella paratyphi A (strain ATCC 9150 / SARB42).